The following is a 213-amino-acid chain: MAAVEPENTNPQSTEEEKETGQEIVSPDQYIKHPLQNRWALWFFKNDKSKTWQANLRLISKFDTVEDFWALYNHIQLSSNLMSGCDYSLFKDGIEPMWEDEKNKRGGRWLITLNKQQRRNDLDRFWLETLMCLIGESFDEHSDDVCGAVVNVRAKGDKIAIWTTEFENKDAVTHIGRVYKERLGLPAKVVIGYQSHADTATKSGSTTKNRFVV.

Residues 1–27 form a disordered region; it reads MAAVEPENTNPQSTEEEKETGQEIVSP. MRNA is bound by residues 52–53, 98–99, 153–158, and 201–203; these read WQ, WE, RAKGDK, and TKS.

The protein belongs to the eukaryotic initiation factor 4E family. As to quaternary structure, eIF4F is a multi-subunit complex, the composition of which varies with external and internal environmental conditions. It is composed of at least eif4a, eif4e and eif4g. eif4e is also known to interact with other partners. tacc3/maskin competes with eif4g for binding to eif4e.

The protein localises to the cytoplasm. It localises to the nucleus. Functionally, recognizes and binds the 7-methylguanosine (m7G)-containing mRNA cap during an early step in the initiation of protein synthesis and facilitates ribosome binding by inducing the unwinding of the mRNAs secondary structures. In addition to its role in translation initiation, also acts as a regulator of translation and stability in the cytoplasm. Maternal RNA in oocytes remain in a dormant state as tacc3/maskin outcompetes eif4g to bind eif4e, thereby preventing translation. During oocyte maturation this complex dissolves and eif4g binds eif4e to allow translation of maternal RNAs. Also promotes export of a subset of mRNAs from the nucleus to the cytoplasm. The polypeptide is Eukaryotic translation initiation factor 4E (eif4e) (Xenopus laevis (African clawed frog)).